We begin with the raw amino-acid sequence, 93 residues long: Large ribosomal subunit protein uL23cz/uL23cy (93 aa).

Belongs to the universal ribosomal protein uL23 family. Part of the 50S ribosomal subunit.

The protein localises to the plastid. The protein resides in the chloroplast. Functionally, binds to 23S rRNA. The polypeptide is Large ribosomal subunit protein uL23cz/uL23cy (rpl23-A) (Helianthus annuus (Common sunflower)).